The following is a 750-amino-acid chain: 1,4-alpha-glucan branching enzyme GlgB (750 aa).

The active-site Nucleophile is the D425. E478 serves as the catalytic Proton donor.

Belongs to the glycosyl hydrolase 13 family. GlgB subfamily. As to quaternary structure, monomer.

It catalyses the reaction Transfers a segment of a (1-&gt;4)-alpha-D-glucan chain to a primary hydroxy group in a similar glucan chain.. Its pathway is glycan biosynthesis; glycogen biosynthesis. Catalyzes the formation of the alpha-1,6-glucosidic linkages in glycogen by scission of a 1,4-alpha-linked oligosaccharide from growing alpha-1,4-glucan chains and the subsequent attachment of the oligosaccharide to the alpha-1,6 position. This chain is 1,4-alpha-glucan branching enzyme GlgB, found in Cupriavidus pinatubonensis (strain JMP 134 / LMG 1197) (Cupriavidus necator (strain JMP 134)).